A 382-amino-acid chain; its full sequence is Putative UDP-sugar transporter DDB_G0278631 (382 aa).

The next 7 helical transmembrane spans lie at 117-137, 183-203, 211-231, 234-254, 264-284, 302-322, and 354-374; these read FSAS…ILHI, MYSA…YFIL, IIAS…TDLS, SLGY…LIYV, YDML…LMIV, FQAY…CIFF, and IIIH…SIWY.

Belongs to the TPT transporter family. SLC35D subfamily.

The protein localises to the membrane. May be nvolved in the import of UDP-sugars. The chain is Putative UDP-sugar transporter DDB_G0278631 from Dictyostelium discoideum (Social amoeba).